Consider the following 356-residue polypeptide: MVDAAVLAKLEEGYAKLAASDSKSLLKKYLTKEVFDNLKNKVTPTFKSTLLDVIQSGLENHDSGVGIYAPDAEAYTVFADLFDPIIEDYHGGFKKTDKHPASNFGDVSTFGNVDPTNEYVISTRVRCGRSMQGYPFNPCLTEAQYKEMESKVSSTLSGLEGELKGKFYPLTGMEKAVQQQLIDDHFLFKEGDRFLQAANACRFWPSGRGIYHNDAKTFLVWCNEEDHLRIISMQQGGDLGQIYKRLVTAVNEIEKRVPFSHDDRLGFLTFCPTNLGTTIRASVHIKVPKLASNKAKLEEVAAKYNLQVRGTRGEHTEAEGGVYDISNKRRMGLTEFEAVKEMYDGITELIKLEKSL.

Residues 6-91 (VLAKLEEGYA…FDPIIEDYHG (86 aa)) enclose the Phosphagen kinase N-terminal domain. 64 to 68 (GVGIY) contacts substrate. One can recognise a Phosphagen kinase C-terminal domain in the interval 119–356 (YVISTRVRCG…TELIKLEKSL (238 aa)). Residues 122–126 (STRVR) and His-185 contribute to the ATP site. Substrate is bound at residue Glu-225. Arg-229 provides a ligand contact to ATP. Position 271 (Cys-271) interacts with substrate. ATP contacts are provided by residues 280-284 (RASVH) and 309-314 (RGTRGE). Glu-314 lines the substrate pocket.

It belongs to the ATP:guanido phosphotransferase family.

It catalyses the reaction L-arginine + ATP = N(omega)-phospho-L-arginine + ADP + H(+). The chain is Arginine kinase 1 from Drosophila melanogaster (Fruit fly).